A 236-amino-acid chain; its full sequence is Small ribosomal subunit protein uS2c (236 aa).

It belongs to the universal ribosomal protein uS2 family.

The protein resides in the plastid. Its subcellular location is the chloroplast. The polypeptide is Small ribosomal subunit protein uS2c (rps2) (Manihot esculenta (Cassava)).